The following is a 305-amino-acid chain: UDP-3-O-acyl-N-acetylglucosamine deacetylase (305 aa).

Residues histidine 78, histidine 237, and aspartate 241 each coordinate Zn(2+). Histidine 264 acts as the Proton donor in catalysis.

The protein belongs to the LpxC family. Requires Zn(2+) as cofactor.

The enzyme catalyses a UDP-3-O-[(3R)-3-hydroxyacyl]-N-acetyl-alpha-D-glucosamine + H2O = a UDP-3-O-[(3R)-3-hydroxyacyl]-alpha-D-glucosamine + acetate. The protein operates within glycolipid biosynthesis; lipid IV(A) biosynthesis; lipid IV(A) from (3R)-3-hydroxytetradecanoyl-[acyl-carrier-protein] and UDP-N-acetyl-alpha-D-glucosamine: step 2/6. Catalyzes the hydrolysis of UDP-3-O-myristoyl-N-acetylglucosamine to form UDP-3-O-myristoylglucosamine and acetate, the committed step in lipid A biosynthesis. The protein is UDP-3-O-acyl-N-acetylglucosamine deacetylase of Burkholderia ambifaria (strain ATCC BAA-244 / DSM 16087 / CCUG 44356 / LMG 19182 / AMMD) (Burkholderia cepacia (strain AMMD)).